Here is a 224-residue protein sequence, read N- to C-terminus: uncharacterized protein (224 aa).

The signal sequence occupies residues 1–23 (MKKLLAAGIIGLLTVSIASPSFA). The VWFA domain occupies 31–224 (NVAVLFDGSG…WEKEAQKFTE (194 aa)).

The protein to B.subtilis YwmC.

This is an uncharacterized protein from Bacillus subtilis (strain 168).